Consider the following 189-residue polypeptide: Stathmin-4 (189 aa).

S-palmitoyl cysteine attachment occurs at residues cysteine 20 and cysteine 22. An SLD domain is found at 48-189 (SDMEVIELNK…NKELKEEASR (142 aa)). Glutamate 54 and serine 90 each carry phosphoserine. The stretch at 90-189 (SLEEIQKKLE…NKELKEEASR (100 aa)) forms a coiled coil. A disordered region spans residues 168 to 189 (QEKDKHAEEVRKNKELKEEASR).

It belongs to the stathmin family. As to expression, nervous tissue.

It localises to the golgi apparatus. The protein localises to the cell projection. It is found in the growth cone. The protein resides in the axon. Exhibits microtubule-destabilizing activity. This is Stathmin-4 (Stmn4) from Rattus norvegicus (Rat).